A 325-amino-acid polypeptide reads, in one-letter code: Phosphate import ATP-binding protein PstB (325 aa).

In terms of domain architecture, ABC transporter spans 79–320; the sequence is IDNYNLWYSN…PNNEKTKDYI (242 aa). ATP is bound at residue 111-118; that stretch reads GPSGCGKS.

Belongs to the ABC transporter superfamily. Phosphate importer (TC 3.A.1.7) family. As to quaternary structure, the complex is composed of two ATP-binding proteins (PstB), two transmembrane proteins (PstC and PstA) and a solute-binding protein (PstS).

Its subcellular location is the cell membrane. It carries out the reaction phosphate(out) + ATP + H2O = ADP + 2 phosphate(in) + H(+). Part of the ABC transporter complex PstSACB involved in phosphate import. Responsible for energy coupling to the transport system. The chain is Phosphate import ATP-binding protein PstB from Mycoplasmoides gallisepticum (strain R(low / passage 15 / clone 2)) (Mycoplasma gallisepticum).